Here is a 333-residue protein sequence, read N- to C-terminus: MKTLSEFIVERQAEYPNAKGELSGILSSIRLLAKIIHRDINKAGLTNILGQSGIENVQGESQMKLDLFAHNTMKAALMAREEVAGFASEEEESFIAFDTERGRNAKYIILTDPLDGSSNIDVNVSVGTIFSIYRRVSPIGSPVTLEDFMQPGNKQVAAGYIVYGSSTMLVYTTGNGVNGFTYDPSIGTFCLSHENMQMPKEGKIYSINEGQYLKFPQGVKKYIKYCQEEDKATHRPYVSRYIGSLVADFHRNLLKGGIYIYPSATNYPNGKLRLLYEGNPIAFLAEQAGGVATDGYRRILDIEPTALHERVPLFVGSEDMVKKAQEMMEEFKE.

Residues Glu-89, Asp-112, Leu-114, and Asp-115 each coordinate Mg(2+). Substrate contacts are provided by residues 115 to 118 (DGSS), Asn-208, Tyr-241, and Lys-271. Glu-277 lines the Mg(2+) pocket.

Belongs to the FBPase class 1 family. Homotetramer. Requires Mg(2+) as cofactor.

Its subcellular location is the cytoplasm. It carries out the reaction beta-D-fructose 1,6-bisphosphate + H2O = beta-D-fructose 6-phosphate + phosphate. It functions in the pathway carbohydrate biosynthesis; gluconeogenesis. This is Fructose-1,6-bisphosphatase class 1 from Haemophilus influenzae (strain ATCC 51907 / DSM 11121 / KW20 / Rd).